The sequence spans 316 residues: Pantothenate kinase (316 aa).

95–102 contributes to the ATP binding site; that stretch reads GSVAVGKS.

Belongs to the prokaryotic pantothenate kinase family.

The protein resides in the cytoplasm. The catalysed reaction is (R)-pantothenate + ATP = (R)-4'-phosphopantothenate + ADP + H(+). It functions in the pathway cofactor biosynthesis; coenzyme A biosynthesis; CoA from (R)-pantothenate: step 1/5. This chain is Pantothenate kinase, found in Shewanella woodyi (strain ATCC 51908 / MS32).